Reading from the N-terminus, the 410-residue chain is MSVFDSKFKGIHVYSEIGELESVLVHEPGREIDYITPARLDELLFSAILESHDARKEHKQFVAELKANDINVVELIDLVAETYDLASQEAKDKLIEEFLEDSEPVLSEEHKVVVRNFLKAKKTSRELVEIMMAGITKYDLGIEADHELIVDPMPNLYFTRDPFASVGNGVTIHYMRYKVRQRETLFSRFVFSNHPKLINTPWYYDPSLKLSIEGGDVFIYNNDTLVVGVSERTDLQTVTLLAKNIVANKECEFKRIVAINVPKWTNLMHLDTWLTMLDKDKFLYSPIANDVFKFWDYDLVNGGAEPQPVENGLPLEGLLQSIINKKPVLIPIAGEGASQMEIERETHFDGTNYLAIRPGVVIGYSRNEKTNAALEAAGIKVLPFHGNQLSLGMGNARCMSMPLSRKDVKW.

C398 (amidino-cysteine intermediate) is an active-site residue.

It belongs to the arginine deiminase family. Homodimer.

It localises to the cytoplasm. It carries out the reaction L-arginine + H2O = L-citrulline + NH4(+). Its pathway is amino-acid degradation; L-arginine degradation via ADI pathway; carbamoyl phosphate from L-arginine: step 1/2. This is Arginine deiminase (arcA) from Mycoplasmopsis arginini (Mycoplasma arginini).